A 105-amino-acid chain; its full sequence is Cell division topological specificity factor (105 aa).

Belongs to the MinE family.

In terms of biological role, prevents the cell division inhibition by proteins MinC and MinD at internal division sites while permitting inhibition at polar sites. This ensures cell division at the proper site by restricting the formation of a division septum at the midpoint of the long axis of the cell. This is Cell division topological specificity factor from Prochlorococcus marinus (strain MIT 9515).